The following is a 104-amino-acid chain: Zinc-containing ferredoxin-2 (104 aa).

Positions 2 to 37 (GIDPNYRQNRQVVGEHEGHKIYGPVEPPGKLGIHGT) are N-terminal extension. Zn(2+) contacts are provided by His-17, His-20, and His-35. 2 consecutive 4Fe-4S ferredoxin-type domains span residues 38-66 (IVGVDFDVCIADGSCINACPVNVFQWFDT) and 75-104 (KADPINEKACIFCMACVNVCPVAAIDVKPP). Residues Cys-46 and Cys-52 each coordinate [3Fe-4S] cluster. Cys-56 lines the [4Fe-4S] cluster pocket. Residue Asp-77 coordinates Zn(2+). Residues Cys-84, Cys-87, and Cys-90 each coordinate [4Fe-4S] cluster. Cys-94 contacts [3Fe-4S] cluster.

Requires [3Fe-4S] cluster as cofactor. [4Fe-4S] cluster serves as cofactor. The cofactor is Zn(2+).

Ferredoxins are iron-sulfur proteins that transfer electrons in a wide variety of metabolic reactions. The polypeptide is Zinc-containing ferredoxin-2 (zfx2) (Sulfurisphaera tokodaii (strain DSM 16993 / JCM 10545 / NBRC 100140 / 7) (Sulfolobus tokodaii)).